Reading from the N-terminus, the 326-residue chain is Beta-1,3-galactosyltransferase 1 (326 aa).

Residues 1 to 6 (MASKVS) lie on the Cytoplasmic side of the membrane. The chain crosses the membrane as a helical; Signal-anchor for type II membrane protein span at residues 7-26 (CLYVLTVVCWASALWYLSIT). The Lumenal portion of the chain corresponds to 27 to 326 (RPTSSYTGSK…DMSSKKHLRC (300 aa)). 2 N-linked (GlcNAc...) asparagine glycosylation sites follow: Asn-47 and Asn-151.

Belongs to the glycosyltransferase 31 family. The cofactor is Mn(2+).

The protein resides in the golgi apparatus membrane. It catalyses the reaction an N-acetyl-beta-D-glucosaminyl derivative + UDP-alpha-D-galactose = a beta-D-galactosyl-(1-&gt;3)-N-acetyl-beta-D-glucosaminyl derivative + UDP + H(+). The catalysed reaction is a beta-D-GlcNAc-(1-&gt;3)-beta-D-Gal-(1-&gt;4)-beta-D-Glc-(1&lt;-&gt;1)-Cer(d18:1(4E)) + UDP-alpha-D-galactose = a beta-D-Gal-(1-&gt;3)-beta-D-GlcNAc-(1-&gt;3)-beta-D-Gal-(1-&gt;4)-beta-D-Glc-(1&lt;-&gt;1')-Cer(d18:1(4E)) + UDP + H(+). Its pathway is protein modification; protein glycosylation. In terms of biological role, beta-1,3-galactosyltransferase that transfers galactose from UDP-galactose to substrates with a terminal beta-N-acetylglucosamine (beta-GlcNAc) residue. Involved in the biosynthesis of the carbohydrate moieties of glycolipids and glycoproteins. In Gorilla gorilla gorilla (Western lowland gorilla), this protein is Beta-1,3-galactosyltransferase 1 (B3GALT1).